Reading from the N-terminus, the 1017-residue chain is Multiple C2 domain and transmembrane region protein 14 (1017 aa).

A C2 1 domain is found at 1–110 (MADNVLRKLI…ASAGSETLVY (110 aa)). Positions 139–231 (AAPAATEPKP…PAEVKNPPIP (93 aa)) are disordered. The span at 141 to 153 (PAATEPKPEAAAA) shows a compositional bias: low complexity. Residues 154–213 (TEEKPPEIAKAEDGKKETEAAKTEEKKEGDKKEEEKPKEEAKPDEKKPDAPPDTKAKKPD) show a composition bias toward basic and acidic residues. Over residues 217–231 (APPPPPAEVKNPPIP) the composition is skewed to pro residues. C2 domains are found at residues 258–387 (DLEL…PQWY), 420–554 (DSGG…SRWF), and 587–714 (VTSD…LNSY). Residues D296, N299, D352, T355, and E359 each coordinate Ca(2+). The next 2 helical transmembrane spans lie at 851-871 (VAIVLCPHLVLPTVFMYAFLI) and 957-977 (ATCIFVVFCLFASFLFYIVPF).

This sequence belongs to the MCTP family. Ca(2+) serves as cofactor. In terms of tissue distribution, expressed in incipient leaf primordia and in roots meristems. Observed in flowers.

Its subcellular location is the membrane. It localises to the vesicle. It is found in the golgi apparatus membrane. Its function is as follows. May function as a signaling molecule by regulating the trafficking of other regulators. In Arabidopsis thaliana (Mouse-ear cress), this protein is Multiple C2 domain and transmembrane region protein 14.